Here is a 103-residue protein sequence, read N- to C-terminus: Large ribosomal subunit protein eL14 (103 aa).

This sequence belongs to the eukaryotic ribosomal protein eL14 family.

The sequence is that of Large ribosomal subunit protein eL14 from Ignicoccus hospitalis (strain KIN4/I / DSM 18386 / JCM 14125).